We begin with the raw amino-acid sequence, 186 residues long: Ribosome-recycling factor (186 aa).

Belongs to the RRF family.

The protein localises to the cytoplasm. Its function is as follows. Responsible for the release of ribosomes from messenger RNA at the termination of protein biosynthesis. May increase the efficiency of translation by recycling ribosomes from one round of translation to another. The protein is Ribosome-recycling factor of Burkholderia lata (strain ATCC 17760 / DSM 23089 / LMG 22485 / NCIMB 9086 / R18194 / 383).